The sequence spans 109 residues: LSM2-LSM8 complex subunit LSM8 (109 aa).

Residues 1–70 (MSATLKDYLN…IALVGLIDAE (70 aa)) enclose the Sm domain.

This sequence belongs to the snRNP Sm proteins family. As to quaternary structure, component of the heptameric LSM2-LSM8 complex that forms a seven-membered ring structure with a donut shape; an RNA strand can pass through the hole in the center of the ring structure. The LSm subunits are arranged in the order LSM8, LSM2, LSM3, LSM6, LSM5, LSM7 and LSM4. Component of the spliceosome U4/U6-U5 tri-snRNP complex composed of the U4, U6 and U5 snRNAs and at least PRP3, PRP4, PRP6, PRP8, PRP18, PRP31, PRP38, SNU13, SNU23, SNU66, SNU114, SPP381, SMB1, SMD1, SMD2, SMD3, SMX2, SMX3, LSM2, LSM3, LSM4, LSM5, LSM6, LSM7, LSM8, BRR2 and DIB1.

It localises to the nucleus. Its subcellular location is the cytoplasm. Functionally, component of the nuclear LSM2-LSM8 complex, which is involved in spliceosome assembly. The LSM2-LSM8 complex plays a role in the biogenesis of the spliceosomal U4/U6-U5 tri-snRNP complex by accelerating PRP24-mediated annealing of U4/U6 di-snRNA. The LSM2-LSM8 complex binds U6 snRNA terminating with a non-cyclic 3' phosphate group. LSM2-LSM8 is probably also involved in degradation of nuclear pre-mRNA by targeting them for decapping. LSM2-LSM8 could be involved in processing of pre-tRNAs, pre-rRNAs and U3 snoRNA, although involvement may be indirect. This chain is LSM2-LSM8 complex subunit LSM8 (LSM8), found in Saccharomyces cerevisiae (strain ATCC 204508 / S288c) (Baker's yeast).